The following is a 347-amino-acid chain: Cell division protein FtsQ (347 aa).

Residues M1 to P55 form a disordered region. The Cytoplasmic segment spans residues M1 to K66. Over residues P10–D33 the composition is skewed to basic and acidic residues. Residues I67 to A87 traverse the membrane as a helical segment. The Periplasmic segment spans residues Y88–H347. The region spanning E98 to R166 is the POTRA domain. The disordered stretch occupies residues D308–H347. The span at A313 to A340 shows a compositional bias: low complexity.

The protein belongs to the FtsQ/DivIB family. FtsQ subfamily.

Its subcellular location is the cell inner membrane. Functionally, essential cell division protein. The chain is Cell division protein FtsQ from Koribacter versatilis (strain Ellin345).